A 197-amino-acid polypeptide reads, in one-letter code: Short chain dehydrogenase ausX (197 aa).

NADP(+) contacts are provided by I49, D95, R157, and Y189. The Proton acceptor role is filled by Y189. The Proton donor role is filled by Y189.

The protein belongs to the short-chain dehydrogenases/reductases (SDR) family.

It participates in secondary metabolite biosynthesis; terpenoid biosynthesis. In terms of biological role, short chain dehydrogenase; part of the gene cluster A that mediates the biosynthesis of austinol and dehydroaustinol, two fungal meroterpenoids. The first step of the pathway is the synthesis of 3,5-dimethylorsellinic acid by the polyketide synthase ausA. 3,5-dimethylorsellinic acid is then prenylated by the polyprenyl transferase ausN. Further epoxidation by the FAD-dependent monooxygenase ausM and cyclization by the probable terpene cyclase ausL lead to the formation of protoaustinoid A. Protoaustinoid A is then oxidized to spiro-lactone preaustinoid A3 by the combined action of the FAD-binding monooxygenases ausB and ausC, and the dioxygenase ausE. Acid-catalyzed keto-rearrangement and ring contraction of the tetraketide portion of preaustinoid A3 by ausJ lead to the formation of preaustinoid A4. The aldo-keto reductase ausK, with the help of ausH, is involved in the next step by transforming preaustinoid A4 into isoaustinone which is in turn hydroxylated by the P450 monooxygenase ausI to form austinolide. Finally, the cytochrome P450 monooxygenase ausG modifies austinolide to austinol. Austinol can be further modified to dehydroaustinol which forms a diffusible complex with diorcinol that initiates conidiation. Due to genetic rearrangements of the clusters and the subsequent loss of some enzymes, the end products of the Emericella nidulans austinoid biosynthesis clusters are austinol and dehydroaustinol, even if additional enzymes, such as the O-acetyltransferase ausQ and the cytochrome P450 monooxygenase ausR are still functional. This Emericella nidulans (strain FGSC A4 / ATCC 38163 / CBS 112.46 / NRRL 194 / M139) (Aspergillus nidulans) protein is Short chain dehydrogenase ausX.